The chain runs to 211 residues: Pyridoxine/pyridoxamine 5'-phosphate oxidase (211 aa).

Substrate is bound by residues 7 to 10 and Lys65; that span reads RREY. FMN contacts are provided by residues 60-65, 75-76, Arg81, Lys82, and Gln104; these read RIVLLK and YT. 3 residues coordinate substrate: Tyr122, Arg126, and Ser130. FMN contacts are provided by residues 139–140 and Trp184; that span reads QS. 190-192 serves as a coordination point for substrate; it reads RLH. Arg194 lines the FMN pocket.

Belongs to the pyridoxamine 5'-phosphate oxidase family. As to quaternary structure, homodimer. FMN is required as a cofactor.

The catalysed reaction is pyridoxamine 5'-phosphate + O2 + H2O = pyridoxal 5'-phosphate + H2O2 + NH4(+). It carries out the reaction pyridoxine 5'-phosphate + O2 = pyridoxal 5'-phosphate + H2O2. It participates in cofactor metabolism; pyridoxal 5'-phosphate salvage; pyridoxal 5'-phosphate from pyridoxamine 5'-phosphate: step 1/1. The protein operates within cofactor metabolism; pyridoxal 5'-phosphate salvage; pyridoxal 5'-phosphate from pyridoxine 5'-phosphate: step 1/1. Catalyzes the oxidation of either pyridoxine 5'-phosphate (PNP) or pyridoxamine 5'-phosphate (PMP) into pyridoxal 5'-phosphate (PLP). The protein is Pyridoxine/pyridoxamine 5'-phosphate oxidase of Vibrio cholerae serotype O1 (strain ATCC 39541 / Classical Ogawa 395 / O395).